The primary structure comprises 585 residues: Probable inactive serine/threonine-protein kinase slob1 (585 aa).

The segment at 21 to 82 (DQSSLECNDC…LCRSCNNSFE (62 aa)) adopts an FYVE-type zinc-finger fold. Zn(2+) contacts are provided by C27, C30, C43, C46, C51, C54, C74, and C77. One can recognise a Protein kinase domain in the interval 108–478 (SKPLQDIGHT…STSLLNNSFN (371 aa)). 2 stretches are compositionally biased toward low complexity: residues 426–456 (ISKL…NISS) and 466–503 (LPSS…ISSP). Residues 426–585 (ISKLSSSSSN…SLKPSSTKKK (160 aa)) are disordered. Pro residues predominate over residues 513–532 (TPPPPPPPPKSAPPPPPPPS). The span at 533–542 (SSKLPPSSSS) shows a compositional bias: low complexity. The WH2 domain occupies 542 to 562 (SRNSLLESIRNADNAKKLKKT).

This sequence belongs to the protein kinase superfamily. Ser/Thr protein kinase family.

The sequence is that of Probable inactive serine/threonine-protein kinase slob1 (slob1) from Dictyostelium discoideum (Social amoeba).